The primary structure comprises 32 residues: Cytochrome b6-f complex subunit 7 (32 aa).

Residues 5-25 form a helical membrane-spanning segment; that stretch reads FIASASISFIITLIGLTLGFA.

The protein belongs to the PetM family. In terms of assembly, the 4 large subunits of the cytochrome b6-f complex are cytochrome b6, subunit IV (17 kDa polypeptide, PetD), cytochrome f and the Rieske protein, while the 4 small subunits are PetG, PetL, PetM and PetN. The complex functions as a dimer.

The protein resides in the plastid. It localises to the chloroplast thylakoid membrane. In terms of biological role, component of the cytochrome b6-f complex, which mediates electron transfer between photosystem II (PSII) and photosystem I (PSI), cyclic electron flow around PSI, and state transitions. The protein is Cytochrome b6-f complex subunit 7 of Guillardia theta (Cryptophyte).